Consider the following 63-residue polypeptide: Large ribosomal subunit protein bL28 (63 aa).

This sequence belongs to the bacterial ribosomal protein bL28 family.

This is Large ribosomal subunit protein bL28 from Clostridium perfringens (strain SM101 / Type A).